Reading from the N-terminus, the 400-residue chain is Formate-dependent phosphoribosylglycinamide formyltransferase (400 aa).

Residues 22-23 (EL) and Glu-82 contribute to the N(1)-(5-phospho-beta-D-ribosyl)glycinamide site. Residues Arg-115, Lys-157, 162–167 (SSGKGQ), 197–200 (EGFI), and Glu-205 contribute to the ATP site. The ATP-grasp domain maps to 120 to 315 (RLAAETLGLP…EFELHARAIL (196 aa)). The Mg(2+) site is built by Glu-274 and Glu-286. N(1)-(5-phospho-beta-D-ribosyl)glycinamide is bound by residues Asp-293, Lys-362, and 369-370 (RR).

The protein belongs to the PurK/PurT family. In terms of assembly, homodimer.

It catalyses the reaction N(1)-(5-phospho-beta-D-ribosyl)glycinamide + formate + ATP = N(2)-formyl-N(1)-(5-phospho-beta-D-ribosyl)glycinamide + ADP + phosphate + H(+). It participates in purine metabolism; IMP biosynthesis via de novo pathway; N(2)-formyl-N(1)-(5-phospho-D-ribosyl)glycinamide from N(1)-(5-phospho-D-ribosyl)glycinamide (formate route): step 1/1. Functionally, involved in the de novo purine biosynthesis. Catalyzes the transfer of formate to 5-phospho-ribosyl-glycinamide (GAR), producing 5-phospho-ribosyl-N-formylglycinamide (FGAR). Formate is provided by PurU via hydrolysis of 10-formyl-tetrahydrofolate. In Cupriavidus metallidurans (strain ATCC 43123 / DSM 2839 / NBRC 102507 / CH34) (Ralstonia metallidurans), this protein is Formate-dependent phosphoribosylglycinamide formyltransferase.